A 197-amino-acid chain; its full sequence is Elongation factor Ts (197 aa).

The segment at 81-84 is involved in Mg(2+) ion dislocation from EF-Tu; the sequence is TDFV.

Belongs to the EF-Ts family.

It localises to the cytoplasm. Functionally, associates with the EF-Tu.GDP complex and induces the exchange of GDP to GTP. It remains bound to the aminoacyl-tRNA.EF-Tu.GTP complex up to the GTP hydrolysis stage on the ribosome. This chain is Elongation factor Ts, found in Sulfurihydrogenibium sp. (strain YO3AOP1).